A 363-amino-acid chain; its full sequence is uncharacterized protein (363 aa).

29–36 (GSINSGKT) contributes to the ATP binding site.

This sequence belongs to the archaeal ATPase family.

This is an uncharacterized protein from Methanocaldococcus jannaschii (strain ATCC 43067 / DSM 2661 / JAL-1 / JCM 10045 / NBRC 100440) (Methanococcus jannaschii).